A 271-amino-acid chain; its full sequence is uncharacterized protein (271 aa).

This is an uncharacterized protein from Mycobacterium tuberculosis (strain CDC 1551 / Oshkosh).